The chain runs to 122 residues: MDKNKKLQSKRLRRRRHVRNKLRGSADQPRLCIQRTLKHFACQVVDDQAGKTLLSASTRDKTVRDQVKAGGNCDAAALVGKLVAEKAAEAGVKTVKLDRGHNKYHGRVKAFADAAREAGLQF.

Residues 1–22 (MDKNKKLQSKRLRRRRHVRNKL) are compositionally biased toward basic residues. The segment at 1-25 (MDKNKKLQSKRLRRRRHVRNKLRGS) is disordered.

It belongs to the universal ribosomal protein uL18 family. In terms of assembly, part of the 50S ribosomal subunit; part of the 5S rRNA/L5/L18/L25 subcomplex. Contacts the 5S and 23S rRNAs.

This is one of the proteins that bind and probably mediate the attachment of the 5S RNA into the large ribosomal subunit, where it forms part of the central protuberance. This Rhodopirellula baltica (strain DSM 10527 / NCIMB 13988 / SH1) protein is Large ribosomal subunit protein uL18.